The primary structure comprises 98 residues: Co-chaperonin GroES (98 aa).

The disordered stretch occupies residues 32–56; that stretch reads NAKEKPQQGEVLAVGPGRRDDEGKR.

It belongs to the GroES chaperonin family. In terms of assembly, heptamer of 7 subunits arranged in a ring. Interacts with the chaperonin GroEL.

It localises to the cytoplasm. Its function is as follows. Together with the chaperonin GroEL, plays an essential role in assisting protein folding. The GroEL-GroES system forms a nano-cage that allows encapsulation of the non-native substrate proteins and provides a physical environment optimized to promote and accelerate protein folding. GroES binds to the apical surface of the GroEL ring, thereby capping the opening of the GroEL channel. In Bifidobacterium animalis subsp. lactis (strain AD011), this protein is Co-chaperonin GroES.